The following is a 137-amino-acid chain: Nucleoside diphosphate kinase (137 aa).

Residues lysine 9, phenylalanine 57, arginine 85, threonine 91, arginine 102, and asparagine 112 each contribute to the ATP site. Histidine 115 functions as the Pros-phosphohistidine intermediate in the catalytic mechanism.

It belongs to the NDK family. In terms of assembly, homotetramer. Requires Mg(2+) as cofactor.

The protein localises to the cytoplasm. The catalysed reaction is a 2'-deoxyribonucleoside 5'-diphosphate + ATP = a 2'-deoxyribonucleoside 5'-triphosphate + ADP. It carries out the reaction a ribonucleoside 5'-diphosphate + ATP = a ribonucleoside 5'-triphosphate + ADP. Major role in the synthesis of nucleoside triphosphates other than ATP. The ATP gamma phosphate is transferred to the NDP beta phosphate via a ping-pong mechanism, using a phosphorylated active-site intermediate. The sequence is that of Nucleoside diphosphate kinase from Aliarcobacter butzleri (strain RM4018) (Arcobacter butzleri).